A 472-amino-acid chain; its full sequence is Endoplasmic reticulum oxidoreductin-2 (472 aa).

A signal peptide spans 1-37; it reads MAETDVGSVKGKEKGSGKRWILLIGAIAAVLLAVVVA. Asparagine 44 is a glycosylation site (N-linked (GlcNAc...) asparagine). Disulfide bonds link cysteine 55/cysteine 74, cysteine 57/cysteine 72, cysteine 111/cysteine 371, cysteine 120/cysteine 125, cysteine 221/cysteine 230, and cysteine 374/cysteine 377. Residues arginine 200, threonine 202, and tryptophan 213 each coordinate FAD. FAD is bound by residues serine 241 and histidine 244. The N-linked (GlcNAc...) asparagine glycan is linked to asparagine 267. The FAD site is built by arginine 274 and arginine 281. A glycan (N-linked (GlcNAc...) asparagine) is linked at asparagine 364.

This sequence belongs to the EROs family. In terms of assembly, may function both as a monomer and a homodimer. FAD is required as a cofactor. Post-translationally, N-glycosylated.

It localises to the endoplasmic reticulum membrane. Functionally, essential oxidoreductase that oxidizes proteins in the endoplasmic reticulum to produce disulfide bonds. Acts by oxidizing directly PDI isomerase through a direct disulfide exchange. Does not act as a direct oxidant of folding substrate, but relies on PDI to transfer oxidizing equivalent. Does not oxidize all PDI related proteins, suggesting that it can discriminate between PDI and related proteins. Its reoxidation probably involves electron transfer to molecular oxygen via FAD. Acts independently of glutathione. May be responsible for a significant proportion of reactive oxygen species (ROS) in the cell, thereby being a source of oxidative stress. This Arabidopsis thaliana (Mouse-ear cress) protein is Endoplasmic reticulum oxidoreductin-2 (AERO2).